We begin with the raw amino-acid sequence, 362 residues long: Tryptophan 2,3-dioxygenase (362 aa).

Residues 40 to 44 and Arg111 each bind substrate; that span reads FIIVH. His297 contributes to the heme binding site. Thr311 is a binding site for substrate.

The protein belongs to the tryptophan 2,3-dioxygenase family. In terms of assembly, homotetramer. Heme serves as cofactor.

It catalyses the reaction L-tryptophan + O2 = N-formyl-L-kynurenine. The protein operates within amino-acid degradation; L-tryptophan degradation via kynurenine pathway; L-kynurenine from L-tryptophan: step 1/2. In terms of biological role, heme-dependent dioxygenase that catalyzes the oxidative cleavage of the L-tryptophan (L-Trp) pyrrole ring and converts L-tryptophan to N-formyl-L-kynurenine. Catalyzes the oxidative cleavage of the indole moiety. The polypeptide is Tryptophan 2,3-dioxygenase (Alteromonas mediterranea (strain DSM 17117 / CIP 110805 / LMG 28347 / Deep ecotype)).